Here is a 245-residue protein sequence, read N- to C-terminus: tRNA pseudouridine synthase A (245 aa).

Residue aspartate 52 is the Nucleophile of the active site. Position 111 (tyrosine 111) interacts with substrate.

Belongs to the tRNA pseudouridine synthase TruA family. As to quaternary structure, homodimer.

The enzyme catalyses uridine(38/39/40) in tRNA = pseudouridine(38/39/40) in tRNA. In terms of biological role, formation of pseudouridine at positions 38, 39 and 40 in the anticodon stem and loop of transfer RNAs. In Rickettsia akari (strain Hartford), this protein is tRNA pseudouridine synthase A.